The following is a 185-amino-acid chain: Peptidyl-tRNA hydrolase (185 aa).

Tyr-15 lines the tRNA pocket. The active-site Proton acceptor is the His-20. The tRNA site is built by Tyr-64, Asn-66, and Asn-112.

Belongs to the PTH family. As to quaternary structure, monomer.

The protein localises to the cytoplasm. The catalysed reaction is an N-acyl-L-alpha-aminoacyl-tRNA + H2O = an N-acyl-L-amino acid + a tRNA + H(+). Its function is as follows. Hydrolyzes ribosome-free peptidyl-tRNAs (with 1 or more amino acids incorporated), which drop off the ribosome during protein synthesis, or as a result of ribosome stalling. Catalyzes the release of premature peptidyl moieties from peptidyl-tRNA molecules trapped in stalled 50S ribosomal subunits, and thus maintains levels of free tRNAs and 50S ribosomes. This is Peptidyl-tRNA hydrolase from Porphyromonas gingivalis (strain ATCC BAA-308 / W83).